The sequence spans 315 residues: T-box transcription factor tbx-8 (315 aa).

The segment at residues 11-195 (EDQDKLWNLF…FNPFAKGFRE (185 aa)) is a DNA-binding region (T-box). Basic and acidic residues predominate over residues 193-203 (FREGSQSDRKR). Disordered regions lie at residues 193–235 (FREG…SVSP) and 293–315 (PPPS…INVV). Residues 205-225 (SPSADDSTTDESSSQVSSPQP) show a composition bias toward low complexity. A compositionally biased stretch (acidic residues) spans 305-315 (QEDIEQEINVV).

It is found in the nucleus. Its function is as follows. Transcription factor. Involved in the control of early morphogenesis of the intestine, hypodermis and body-wall muscle. Involved in regulating expression of vab-7. Appears to have partially redundant function to tbx-9. This Caenorhabditis elegans protein is T-box transcription factor tbx-8 (tbx-8).